We begin with the raw amino-acid sequence, 384 residues long: NAD(P) transhydrogenase subunit alpha part 1 (384 aa).

The interval 126-136 is RQD loop; involved in interaction with PntB; it reads PRISRAQSMDI. Residues 127–129, 132–135, 180–182, 202–204, Gly234, Gln247, and Leu266 contribute to the NAD(+) site; these read RIS, QSMD, VGV, and DVR.

This sequence belongs to the AlaDH/PNT family. In terms of assembly, heterotrimer of two alpha chains and a beta (PntB) chain; in Rhodospirillum, the alpha chain is made of two subunits (PntAA and PntAB) and forms a dimer.

It carries out the reaction NAD(+) + NADPH + H(+)(in) = NADH + NADP(+) + H(+)(out). Its function is as follows. The transhydrogenation between NADH and NADP is coupled to respiration and ATP hydrolysis and functions as a proton pump across the membrane. The polypeptide is NAD(P) transhydrogenase subunit alpha part 1 (pntAA) (Rhodospirillum rubrum (strain ATCC 11170 / ATH 1.1.1 / DSM 467 / LMG 4362 / NCIMB 8255 / S1)).